Reading from the N-terminus, the 293-residue chain is 5'-3' exoribonuclease Rnm (293 aa).

The Mn(2+) site is built by H13, H15, D20, H45, E72, H83, H198, D255, and H257.

It belongs to the PHP family. TrpH/YciV subfamily. The cofactor is Mn(2+).

It carries out the reaction a ribonucleoside 3',5'-bisphosphate + H2O = a ribonucleoside 5'-phosphate + phosphate. Its function is as follows. Exoribonuclease that catalyzes the last steps of 5S, 16S and 23S rRNA 5'-end maturation. Removes 3 nucleotides (nt) from the 5' end of 5S, 16S and 23S rRNA precursors to generate the mature 5' ends. Precursors with longer extensions are not processed (7 nt at the 5' end of pre-23S rRNA or 66 nt at the 5'-end of 16S rRNA are not processed). 5S and 23S rRNA maturation occurs more efficiently and accurately on ribosomal particles as compared to free RNA; the enzyme overdigests free RNA but generates the correct 5'-end in ribosomes from rnm deletion strains. Efficiently catalyzes the hydrolysis of the 3'-phosphate from 3',5'-bis-phosphonucleotides as well as the successive hydrolysis of 5'-phosphomononucleotides from the 5'-end of short pieces of RNA and DNA, with no specificity toward the identity of the nucleotide base. Is more efficient at hydrolyzing RNA oligonucleotides than DNA oligonucleotides. This enzyme can also hydrolyze annealed DNA duplexes, albeit at a catalytic efficiency approximately 10-fold lower than that of the corresponding single-stranded oligonucleotides. In Escherichia coli (strain K12), this protein is 5'-3' exoribonuclease Rnm.